The sequence spans 53 residues: Light-harvesting protein B-800/820 alpha chain (53 aa).

Over 1–14 (MNQGKIWTVVNPAV) the chain is Cytoplasmic. Residues 15-35 (GLPLLLGSVAITALLVHLAVL) form a helical membrane-spanning segment. An a bacteriochlorophyll-binding site is contributed by H31. The Periplasmic segment spans residues 36–53 (THTTWFPAFTQGGLKKAA).

Belongs to the antenna complex alpha subunit family. As to quaternary structure, the core complex is formed by different alpha and beta chains, binding bacteriochlorophyll molecules, and arranged most probably in tetrameric structures disposed around the reaction center. The non-pigmented gamma chains may constitute additional components.

It localises to the cell inner membrane. Functionally, antenna complexes are light-harvesting systems, which transfer the excitation energy to the reaction centers. This Rhodoblastus acidophilus (Rhodopseudomonas acidophila) protein is Light-harvesting protein B-800/820 alpha chain.